A 71-amino-acid polypeptide reads, in one-letter code: Exodeoxyribonuclease 7 small subunit (71 aa).

Belongs to the XseB family. As to quaternary structure, heterooligomer composed of large and small subunits.

The protein resides in the cytoplasm. It catalyses the reaction Exonucleolytic cleavage in either 5'- to 3'- or 3'- to 5'-direction to yield nucleoside 5'-phosphates.. Functionally, bidirectionally degrades single-stranded DNA into large acid-insoluble oligonucleotides, which are then degraded further into small acid-soluble oligonucleotides. This is Exodeoxyribonuclease 7 small subunit from Streptococcus equi subsp. zooepidemicus (strain H70).